The following is a 445-amino-acid chain: tRNA-2-methylthio-N(6)-dimethylallyladenosine synthase (445 aa).

The MTTase N-terminal domain maps to lysine 2–histidine 119. Positions 11, 48, 82, 156, 160, and 163 each coordinate [4Fe-4S] cluster. The region spanning arginine 142–serine 378 is the Radical SAM core domain. Residues glutamine 379 to threonine 442 enclose the TRAM domain.

The protein belongs to the methylthiotransferase family. MiaB subfamily. As to quaternary structure, monomer. The cofactor is [4Fe-4S] cluster.

The protein localises to the cytoplasm. It catalyses the reaction N(6)-dimethylallyladenosine(37) in tRNA + (sulfur carrier)-SH + AH2 + 2 S-adenosyl-L-methionine = 2-methylsulfanyl-N(6)-dimethylallyladenosine(37) in tRNA + (sulfur carrier)-H + 5'-deoxyadenosine + L-methionine + A + S-adenosyl-L-homocysteine + 2 H(+). Its function is as follows. Catalyzes the methylthiolation of N6-(dimethylallyl)adenosine (i(6)A), leading to the formation of 2-methylthio-N6-(dimethylallyl)adenosine (ms(2)i(6)A) at position 37 in tRNAs that read codons beginning with uridine. This Aromatoleum aromaticum (strain DSM 19018 / LMG 30748 / EbN1) (Azoarcus sp. (strain EbN1)) protein is tRNA-2-methylthio-N(6)-dimethylallyladenosine synthase.